Consider the following 139-residue polypeptide: Acidic phospholipase A2 Ts-A4 (139 aa).

A signal peptide spans 1–16 (MRTLWILAVLLVGVEG). Intrachain disulfides connect Cys-42–Cys-132, Cys-44–Cys-60, Cys-59–Cys-111, Cys-65–Cys-139, Cys-66–Cys-104, Cys-73–Cys-97, and Cys-91–Cys-102. 3 residues coordinate Ca(2+): Tyr-43, Gly-45, and Gly-47. His-63 is an active-site residue. Asp-64 serves as a coordination point for Ca(2+). Asp-105 is a catalytic residue.

Ca(2+) is required as a cofactor. As to expression, expressed by the venom gland.

It is found in the secreted. It carries out the reaction a 1,2-diacyl-sn-glycero-3-phosphocholine + H2O = a 1-acyl-sn-glycero-3-phosphocholine + a fatty acid + H(+). Its function is as follows. PLA2 catalyzes the calcium-dependent hydrolysis of the 2-acyl groups in 3-sn-phosphoglycerides. The chain is Acidic phospholipase A2 Ts-A4 from Trimeresurus stejnegeri (Chinese green tree viper).